Reading from the N-terminus, the 1544-residue chain is METSAPAPALEKKEAKSGLLEDSSFPDPGKKACPLAVAAAVAAHGVPQQLLPAFHAPLPIDMRHQEGRYHYDPHSVHSVHGPPTLSGSPVISDISLIRLSPHPAGPGESPFSAHHPYVNPHMEHYLRSVHSSPTLSMISAARGLSPADVAHEHLKERGLFSLAAPGTNPSDYYHQMTLMASHPTPYGDLLMQSGGAASAPHLHDYLNPVDASRFSSPRVTPRLSRKRALSISPLSDASLDLQRMIRTSPNSLVAYINNSRSSSAASGSYGHLSAGALSPAFTFPHPINPVAYQQILSQQRGLGSAFGHTPPLIQPSPTFLAQQPMTLTSISTMPTQLSSSSSNCLNDANQNKQNSESAVSSTVNPITIHKRSKVKTEAEGLRPASPLGLTQEQLADLKEDLDRDDCKQEAEVVIYETNCHWADCTKEYDTQEQLVHHINNEHIHGEKKEFVCRWQACTREQKPFKAQYMLVVHMRRHTGEKPHKCTFEGCSKAYSRLENLKTHLRSHTGEKPYVCEHEGCNKAFSNASDRAKHQNRTHSNEKPYICKIPGCTKRYTDPSSLRKHVKTVHGPDAHVTKKQRNDVHVRAPLLKENGDNEASAEPGGRGPEESVEASSTSHTVEDCLHIKAIKTESSGLCQSSPGAQSSCSSEPSPLGSAPNNDSGMEMPGTGPGSLGDLTALADTCPGADTSALAAPSTGGLQLRKHMSTVHRFEQLKREKLKSLKDSCSWAGPAPHTRNTKLPPLPVNGSVLENFNNTGGGGPAGLLPSQRLPELTEVTMLSQLQERRDSSTSTMSSAYTVSRRSSGISPYFSSRRSSEASPLGGLRPHNASSADSYDPISTDASRRSSEASQCSGGGPGLLNLTPAQQYNLRAKYAAATGGPPPTPLPGLDRVSLRTRLALLDAPERALPGACPHPLGPRRGSDGPTYSHGHGHGYAGAAPAFPHEGPNSSTRRASDPVRRPDPLILPRVQRFHSTHNMNPGSLPPCADRRGLHVQSHPSVDSNLTRNAYSPRPPSINENVVMEAVAAGVDGPGLECDLGLVEDELVLPDDVVQYIKAHTGGTLDDGIRQGYPTEGTGFPENSKLPSPGLQGHRRLAAADSNMGPSAPGLGGCQLSYSPSSNLNKSNMPVQWNEVSSGTVDALPTQVKPPPFPHSNLAVVQQKPAFGQYPGYNPQSVQSSSGGLDSTQPHLQLRGAPSASRGSYTQQPRQPAAGSQCLGMSAAMSPQASYSQAHPQLSPNIVSGSLNQFSPSCSNMAAKPSHLGLPQQMEVVPNATIMNGHQREHGVPNSSLAAVSQPHPVLSYPQQDSYQQGSNLLSSHQPGFMESQQNAGFGLMQPRPPLEPNTASRHRGVRSGQQQLYARTTGQAMVTSANQETAEAMPKGPAGTMVSLAPQPSQDTGRAQDQNTLYYYGQIHMYEQNGGCPAVQPQPPQPQACSDSIQPEPLPSPGVNQVSSTVDSQLLEPPQIDFDAIMDDGDHSSLFSGALSPTLLHNLSQNSSRLTTPRNSLTLPSIPAGISNMAVGDMSSMLTSLAEESKFLNMMT.

The disordered stretch occupies residues 1–26 (METSAPAPALEKKEAKSGLLEDSSFP). Phosphoserine is present on residues S145, S230, S232, and S238. A disordered region spans residues 338–364 (SSSSSNCLNDANQNKQNSESAVSSTVN). S385 carries the phosphoserine; by DYRK2 modification. The C2H2-type 1 zinc-finger motif lies at 417 to 444 (TNCHWADCTKEYDTQEQLVHHINNEHIH). The C2H2-type 2; degenerate zinc-finger motif lies at 455–477 (QACTREQKPFKAQYMLVVHMRRH). 3 C2H2-type zinc fingers span residues 483-507 (HKCT…LRSH), 513-538 (YVCE…NRTH), and 544-569 (YICK…KTVH). Disordered regions lie at residues 557 to 619 (DPSS…TSHT) and 635 to 682 (GLCQ…ALAD). Residues 569 to 585 (HGPDAHVTKKQRNDVHV) show a composition bias toward basic and acidic residues. Residues 637 to 657 (CQSSPGAQSSCSSEPSPLGSA) are compositionally biased toward low complexity. At S707 the chain carries Phosphoserine. T708 is modified (phosphothreonine). Position 740 is an N6-acetyllysine; by EP300 (K740). 6 disordered regions span residues 781–800 (SQLQ…AYTV), 805–861 (SGIS…PGLL), 908–963 (ALPG…RRPD), 995–1016 (VQSH…RPPS), 1166–1220 (FGQY…CLGM), and 1422–1457 (GGCP…VSST). Composition is skewed to polar residues over residues 790–800 (STSTMSSAYTV) and 805–814 (SGISPYFSSR). Residues 954 to 963 (RASDPVRRPD) show a composition bias toward basic and acidic residues. S997 is subject to Phosphoserine; by DYRK2. Polar residues-rich tracts occupy residues 997–1009 (SHPS…TRNA), 1173–1190 (NPQS…TQPH), and 1200–1209 (SRGSYTQQPR).

It belongs to the GLI C2H2-type zinc-finger protein family. Interacts with ZIC1 and ZIC2. Interacts with STK36. Interacts with SUFU; this inhibits transcriptional activation mediated by GLI2. Interacts (via C-terminal internal region) with FOXC1 (via N-terminus); this interaction is direct and increases GLI2 DNA-binding and transcriptional activity through a smoothened (SMO)-independent Hedgehog (Hh) signaling pathway. In terms of processing, phosphorylated in vitro by ULK3. Phosphorylated by DYRK2; this inhibits GLI2 transcription factor activity and promotes proteasomal degradation of GLI2. Acetylation at Lys-740 inhibits Hh target gene expression, probably by impeding entry into chromatin thus preventing promoter occupancy.

The protein localises to the nucleus. The protein resides in the cytoplasm. Its subcellular location is the cell projection. It is found in the cilium. In terms of biological role, functions as a transcription regulator in the hedgehog (Hh) pathway. Functions as a transcriptional activator. May also function as transcriptional repressor. Requires STK36 for full transcriptional activator activity. Binds to the DNA sequence 5'-GAACCACCCA-3' which is part of the TRE-2S regulatory element. Is involved in the smoothened (SHH) signaling pathway. Required for normal skeleton development. This is Zinc finger protein GLI2 from Mus musculus (Mouse).